The sequence spans 112 residues: Phosphoribosyl-ATP pyrophosphatase (112 aa).

This sequence belongs to the PRA-PH family.

It is found in the cytoplasm. The catalysed reaction is 1-(5-phospho-beta-D-ribosyl)-ATP + H2O = 1-(5-phospho-beta-D-ribosyl)-5'-AMP + diphosphate + H(+). It participates in amino-acid biosynthesis; L-histidine biosynthesis; L-histidine from 5-phospho-alpha-D-ribose 1-diphosphate: step 2/9. In Chromohalobacter salexigens (strain ATCC BAA-138 / DSM 3043 / CIP 106854 / NCIMB 13768 / 1H11), this protein is Phosphoribosyl-ATP pyrophosphatase.